The sequence spans 134 residues: Small ribosomal subunit protein uS9c (134 aa).

The protein belongs to the universal ribosomal protein uS9 family.

Its subcellular location is the plastid. It localises to the chloroplast. This is Small ribosomal subunit protein uS9c (rps9) from Guillardia theta (Cryptophyte).